The primary structure comprises 284 residues: Elongation factor Ts (284 aa).

Residues 80–83 (TDFV) are involved in Mg(2+) ion dislocation from EF-Tu.

This sequence belongs to the EF-Ts family.

The protein localises to the cytoplasm. Its function is as follows. Associates with the EF-Tu.GDP complex and induces the exchange of GDP to GTP. It remains bound to the aminoacyl-tRNA.EF-Tu.GTP complex up to the GTP hydrolysis stage on the ribosome. The sequence is that of Elongation factor Ts from Neisseria gonorrhoeae (strain ATCC 700825 / FA 1090).